A 143-amino-acid chain; its full sequence is Ribosome maturation factor RimP (143 aa).

It belongs to the RimP family.

Its subcellular location is the cytoplasm. Required for maturation of 30S ribosomal subunits. The protein is Ribosome maturation factor RimP of Borrelia turicatae (strain 91E135).